Here is a 376-residue protein sequence, read N- to C-terminus: Flagellar P-ring protein 2 (376 aa).

An N-terminal signal peptide occupies residues 1–19; the sequence is MTRLLLALILVVSAASAQA.

This sequence belongs to the FlgI family. The basal body constitutes a major portion of the flagellar organelle and consists of four rings (L,P,S, and M) mounted on a central rod.

The protein resides in the periplasm. The protein localises to the bacterial flagellum basal body. Assembles around the rod to form the L-ring and probably protects the motor/basal body from shearing forces during rotation. The sequence is that of Flagellar P-ring protein 2 from Bradyrhizobium diazoefficiens (strain JCM 10833 / BCRC 13528 / IAM 13628 / NBRC 14792 / USDA 110).